Reading from the N-terminus, the 570-residue chain is Formate--tetrahydrofolate ligase (570 aa).

65 to 72 (TPHGEGKT) is an ATP binding site.

The protein belongs to the formate--tetrahydrofolate ligase family.

It carries out the reaction (6S)-5,6,7,8-tetrahydrofolate + formate + ATP = (6R)-10-formyltetrahydrofolate + ADP + phosphate. The protein operates within one-carbon metabolism; tetrahydrofolate interconversion. This chain is Formate--tetrahydrofolate ligase, found in Shewanella putrefaciens (strain CN-32 / ATCC BAA-453).